The chain runs to 955 residues: Histone deacetylase 6 (955 aa).

Histone deacetylase regions lie at residues Thr15 to Phe337 and Met425 to Asn749. His146 serves as the catalytic 1. His561 (2) is an active-site residue. A disordered region spans residues Ser815–Ile840. A compositionally biased stretch (low complexity) spans Met818–Ser831. Residues Ala853–Glu951 form a UBP-type zinc finger. Zn(2+) is bound by residues Cys855, His857, Cys875, Cys878, Cys887, Cys890, and Cys895. The tract at residues Gly896–Phe898 is ubiquitin binding. Positions 902, 906, 912, 925, and 928 each coordinate Zn(2+). Positions Trp924–Tyr931 are ubiquitin binding.

This sequence belongs to the histone deacetylase family. HD type 2 subfamily. The cofactor is Zn(2+).

Its subcellular location is the nucleus. It catalyses the reaction N(6)-acetyl-L-lysyl-[histone] + H2O = L-lysyl-[histone] + acetate. Probable histone deacetylase. Histone deacetylases are responsible for the deacetylation of lysine residues on the N-terminal part of the core histones (H2A, H2B, H3 and H4). Histone deacetylation gives a tag for epigenetic repression and plays an important role in transcriptional regulation, cell cycle progression and developmental events. Histone deacetylases act via the formation of large multiprotein complexes. The polypeptide is Histone deacetylase 6 (hda-6) (Caenorhabditis elegans).